Consider the following 387-residue polypeptide: Odorant receptor 19a (387 aa).

Topologically, residues 1-40 are cytoplasmic; the sequence is MDISKVDSTRALVNHWRIFRIMGIHPPGKRTFWGRHYTAY. A helical membrane pass occupies residues 41-61; the sequence is SMVWNVTFHICIWVSFSVNLL. The Extracellular segment spans residues 62–71; sequence QSNSLETFCE. A helical transmembrane segment spans residues 72-92; it reads SLCVTMPHTLYMLKLINVRRM. Residues 93–127 lie on the Cytoplasmic side of the membrane; sequence RGQMISSHWLLRLLDKRLGCDDERQIIMAGIERAE. A helical membrane pass occupies residues 128–148; sequence FIFRTIFRGLACTVVLGIIYI. Residues 149 to 171 lie on the Extracellular side of the membrane; that stretch reads SASSEPTLMYPTWIPWNWRDSTS. The chain crosses the membrane as a helical span at residues 172-192; it reads AYLATAMLHTTALMANATLVL. The Cytoplasmic segment spans residues 193–254; the sequence is NLSSYPGTYL…LRLFKSLERS (62 aa). A helical transmembrane segment spans residues 255–275; sequence LSMTCFLQFFSTACAQCTICY. Topologically, residues 276–285 are extracellular; that stretch reads FLLFGNVGIM. A helical membrane pass occupies residues 286–306; that stretch reads RFMNMLFLLVILTTETLLLCY. At 307–336 the chain is on the cytoplasmic side; it reads TAELPCKEGESLLTAVYSCNWLSQSVNFRR. Residues 337–357 form a helical membrane-spanning segment; sequence LLLLMLARCQIPMILVSGVIV. Topologically, residues 358-387 are extracellular; the sequence is PISMKTFTVMIKGAYTMLTLLNEIRKTSLE.

The protein belongs to the insect chemoreceptor superfamily. Heteromeric odorant receptor channel (TC 1.A.69) family. Or2a subfamily. Interacts with Orco. Complexes exist early in the endomembrane system in olfactory sensory neurons (OSNs), coupling these complexes to the conserved ciliary trafficking pathway. In terms of tissue distribution, expressed in ai2A olfactory sensory neurons in the antenna.

It localises to the cell membrane. Its function is as follows. Odorant receptor which mediates acceptance or avoidance behavior, depending on its substrates. The odorant receptor repertoire encodes a large collection of odor stimuli that vary widely in identity, intensity, and duration. May form a complex with Orco to form odorant-sensing units, providing sensitive and prolonged odorant signaling and calcium permeability. Involved in the preference for citrus fruits for oviposition, especially through the response to valencene, the primary ligand of Or19a. Larvae growing on citrus fruits suffer a reduced risk of parasitism since endoparasitoid wasps that parasitize larvae are strongly repelled by the smell of citrus, as well as by valencene. The protein is Odorant receptor 19a (Or19a) of Drosophila melanogaster (Fruit fly).